The primary structure comprises 60 residues: Temporin-CG2 (60 aa).

Residues 1 to 22 (MFTLKKPLLVLFFLATINLSLC) form the signal peptide. A propeptide spans 23-43 (EQERNAEEERRDDDERNVEVE) (removed in mature form).

In terms of tissue distribution, expressed by the skin glands.

The protein localises to the secreted. Antimicrobial peptide active against a variety of Gram-positive bacterial strains but not against Gram-negative bacteria. Has weak antifungal activity against a slime mold isolate. Has weak hemolytic activity against human erythrocytes. This chain is Temporin-CG2, found in Amolops chunganensis (Chungan torrent frog).